Reading from the N-terminus, the 782-residue chain is E3 ubiquitin-protein ligase SopA (782 aa).

The segment at 137–171 (VSVSANNRPTVSEGRTPPVSPSLSLQATSSPSSPA) is disordered. Over residues 157 to 171 (PSLSLQATSSPSSPA) the composition is skewed to low complexity. Residue Cys753 is the Glycyl thioester intermediate of the active site.

It belongs to the SopA E3 ligase family. Post-translationally, ubiquitinated in the presence of host E1 ubiquitin-activating enzyme, E2 ubiquitin-conjugating enzyme and ubiquitin.

The protein localises to the secreted. It localises to the host cell. It carries out the reaction S-ubiquitinyl-[E2 ubiquitin-conjugating enzyme]-L-cysteine + [acceptor protein]-L-lysine = [E2 ubiquitin-conjugating enzyme]-L-cysteine + N(6)-ubiquitinyl-[acceptor protein]-L-lysine.. Effector proteins function to alter host cell physiology and promote bacterial survival in host tissues. This protein is an E3 ubiquitin ligase that interferes with host's ubiquitination pathway. For instance, prevents host innate immune response by ubiquitinating and thus sending to degradation host E3 ubiquitin ligases TRIM56 and TRIM65. This Salmonella typhimurium (strain 14028s / SGSC 2262) protein is E3 ubiquitin-protein ligase SopA (sopA).